A 42-amino-acid chain; its full sequence is Aryl-alcohol dehydrogenase (42 aa).

It belongs to the zinc-containing alcohol dehydrogenase family. Homodimer. Zn(2+) serves as cofactor.

It carries out the reaction an aromatic primary alcohol + NAD(+) = an aromatic aldehyde + NADH + H(+). In terms of biological role, oxidizes primary alcohols with an aromatic or cyclohex-1-ene ring. It is highly specific for benzyl alcohol. This Acinetobacter guillouiae (Acinetobacter genomosp. 11) protein is Aryl-alcohol dehydrogenase.